Consider the following 166-residue polypeptide: AP-3 complex subunit sigma (166 aa).

It belongs to the adaptor complexes small subunit family. Adaptor protein complex 3 (AP-3) is a heterotetramer composed of two large adaptins (delta-type subunit and beta-type subunit), a medium adaptin (mu-type subunit) and a small adaptin (sigma-type subunit).

The protein resides in the cytoplasm. Its subcellular location is the golgi apparatus. It is found in the cytoplasmic vesicle membrane. Part of the AP-3 complex, an adaptor-related complex which seems to be clathrin-associated. The complex is associated with the Golgi region as well as more peripheral structures. It facilitates the budding of vesicles from the Golgi membrane and may be directly involved in trafficking to the vacuole. It also function in maintaining the identity of lytic vacuoles and in regulating the transition between storage and lytic vacuoles. This chain is AP-3 complex subunit sigma, found in Arabidopsis thaliana (Mouse-ear cress).